The chain runs to 97 residues: Apolipoprotein C-II (97 aa).

An N-terminal signal peptide occupies residues 1 to 22 (MGSRFFLALFLVLLVLGNEVQG). The tract at residues 63–71 (SVDEKLRDM) is lipid binding. The interval 75 to 97 (SSAAMSTYAGIFTDQLLTLLKGE) is lipoprotein lipase cofactor.

The protein belongs to the apolipoprotein C2 family. Post-translationally, proapolipoprotein C-II is synthesized as a sialic acid containing glycoprotein which is subsequently desialylated prior to its proteolytic processing. Proapolipoprotein C-II, the major form found in plasma undergoes proteolytic cleavage of its N-terminal hexapeptide to generate the mature form apolipoprotein C-II, which occurs as the minor form in plasma.

The protein localises to the secreted. Functionally, component of chylomicrons, very low-density lipoproteins (VLDL), low-density lipoproteins (LDL), and high-density lipoproteins (HDL) in plasma. Plays an important role in lipoprotein metabolism as an activator of lipoprotein lipase. In Grammomys surdaster (African woodland thicket rat), this protein is Apolipoprotein C-II (Apoc2).